Consider the following 175-residue polypeptide: uncharacterized protein (175 aa).

The protein belongs to the asfivirus B175L family.

This is an uncharacterized protein from Ornithodoros (relapsing fever ticks).